Reading from the N-terminus, the 582-residue chain is Hydrazine dehydrogenase (582 aa).

A signal peptide spans 1–32 (MRKFLKVTLASALIGCGVIGTVSSLMVKEAKA). Residues Cys121, Cys124, His125, His141, Cys151, Cys154, His155, His159, Cys170, Cys175, His176, His191, Cys216, Cys219, His220, Cys227, Cys230, His231, His234, Cys247, Cys250, His251, His267, Cys297, Cys300, His301, His306, Cys342, Cys345, His346, His454, and Tyr462 each coordinate heme c. The segment at 561–582 (GSHSAHHHESGHDPAARSMKEH) is disordered. Positions 567 to 582 (HHESGHDPAARSMKEH) are enriched in basic and acidic residues.

In terms of assembly, homotrimer; subunits are linked by two covalent bonds between Tyr-462 of one subunit and heme P460 of an adjacent subunit. May form 24-mer of an octamer of trimers. Heme c serves as cofactor.

Its subcellular location is the anammoxosome. It catalyses the reaction hydrazine + 4 Fe(III)-[cytochrome c] = N2 + 4 Fe(II)-[cytochrome c] + 4 H(+). The protein operates within nitrogen metabolism. With respect to regulation, is strongly and competitively inhibited by NO and hydroxylamine. Functionally, catalyzes the four-electron oxidation of hydrazine to N2. The electrons derived from hydrazine oxidation may be transferred to the quinone pool and exploited to promote the generation of proton-motive force (pmf) across the anammoxosome membrane. Is involved in anaerobic ammonium oxidation (anammox), a biological process in which nitrite is used as the electron acceptor in the conversion of ammonium to dinitrogen gas (N2) and water; this bacterial process has a major role in the Earth's nitrogen cycle and has been estimated to synthesize up to 50% of the dinitrogen gas emitted into our atmosphere from the oceans. Cannot oxidize hydroxylamine to NO. The protein is Hydrazine dehydrogenase of Kuenenia stuttgartiensis.